A 121-amino-acid polypeptide reads, in one-letter code: Phosphoribosyl-AMP cyclohydrolase (121 aa).

Residue Asp76 coordinates Mg(2+). Residue Cys77 coordinates Zn(2+). Mg(2+) contacts are provided by Asp78 and Asp80. 2 residues coordinate Zn(2+): Cys93 and Cys100.

Belongs to the PRA-CH family. Homodimer. Mg(2+) is required as a cofactor. Requires Zn(2+) as cofactor.

It localises to the cytoplasm. It carries out the reaction 1-(5-phospho-beta-D-ribosyl)-5'-AMP + H2O = 1-(5-phospho-beta-D-ribosyl)-5-[(5-phospho-beta-D-ribosylamino)methylideneamino]imidazole-4-carboxamide. The protein operates within amino-acid biosynthesis; L-histidine biosynthesis; L-histidine from 5-phospho-alpha-D-ribose 1-diphosphate: step 3/9. Functionally, catalyzes the hydrolysis of the adenine ring of phosphoribosyl-AMP. This Paracoccus denitrificans (strain Pd 1222) protein is Phosphoribosyl-AMP cyclohydrolase.